A 202-amino-acid polypeptide reads, in one-letter code: D-alanyl-D-alanine dipeptidase (202 aa).

Residues H116 and D123 each contribute to the Zn(2+) site. The active-site Proton donor/acceptor is E181. H184 is a binding site for Zn(2+).

The protein belongs to the peptidase M15D family. It depends on Zn(2+) as a cofactor.

It carries out the reaction D-alanyl-D-alanine + H2O = 2 D-alanine. Its function is as follows. Catalyzes hydrolysis of the D-alanyl-D-alanine dipeptide. May play a role in immunity or defense against glycopeptide antibiotics (perhaps at a moderate level) in the soil environment. Might confer vancomycin resistance to S.coelicolor. The sequence is that of D-alanyl-D-alanine dipeptidase (vanX) from Streptomyces coelicolor (strain ATCC BAA-471 / A3(2) / M145).